The primary structure comprises 678 residues: Oviduct-specific glycoprotein (678 aa).

The N-terminal stretch at 1–21 (MWKLLLWVGLVLVLKHHDGAA) is a signal peptide. In terms of domain architecture, GH18 spans 22–385 (HKLVCYFTNW…YVLNDILVRA (364 aa)). Cys-26 and Cys-51 form a disulfide bridge. Residues 71-72 (LQ), 98-101 (GGWN), Tyr-142, 211-214 (LSYD), and Trp-355 contribute to the chitin site. Residues Asn-402 and Asn-441 are each glycosylated (N-linked (GlcNAc...) asparagine). The interval 524–544 (LTPVGHQSVTPVSHQSVSPGG) is disordered. Positions 528 to 544 (GHQSVTPVSHQSVSPGG) are enriched in polar residues. N-linked (GlcNAc...) asparagine glycosylation is found at Asn-580, Asn-596, and Asn-648. The interval 581 to 606 (ISVTPEGQTMPLRGENLTSEVGTHPR) is disordered. Residues 651–662 (SVNSVTPQTSPL) are compositionally biased toward polar residues. The disordered stretch occupies residues 651-678 (SVNSVTPQTSPLSLKKEIPENSAVDEEA).

Belongs to the glycosyl hydrolase 18 family. Oviduct.

It localises to the cytoplasmic vesicle. It is found in the secretory vesicle. Its function is as follows. Binds to oocyte zona pellucida in vivo. May play a role in the fertilization process and/or early embryonic development. This is Oviduct-specific glycoprotein (OVGP1) from Homo sapiens (Human).